A 397-amino-acid polypeptide reads, in one-letter code: Thioredoxin-interacting protein (397 aa).

Residue Lys-213 forms a Glycyl lysine isopeptide (Lys-Gly) (interchain with G-Cter in ubiquitin) linkage. Position 362 is a phosphoserine (Ser-362).

This sequence belongs to the arrestin family. In terms of assembly, homodimer; disulfide-linked. Interacts with TXN/thioredoxin through its redox-active site. Interacts with transcriptional repressors ZBTB16, ZBTB32 and HDAC1. Interacts with DDIT4. In terms of processing, ubiquitinated; undergoes heterotypic 'Lys-48'-/'Lys-63'-branched polyubiquitination catalyzed by ITCH and UBR5 resulting in proteasomal degradation. Deubiquitinated by USP5, leading to TXNIP stabilization. Ubiquitously expressed.

It localises to the cytoplasm. In terms of biological role, may act as an oxidative stress mediator by inhibiting thioredoxin activity or by limiting its bioavailability. Interacts with COPS5 and restores COPS5-induced suppression of CDKN1B stability, blocking the COPS5-mediated translocation of CDKN1B from the nucleus to the cytoplasm. Functions as a transcriptional repressor, possibly by acting as a bridge molecule between transcription factors and corepressor complexes, and over-expression will induce G0/G1 cell cycle arrest. Required for the maturation of natural killer cells. Acts as a suppressor of tumor cell growth. Inhibits the proteasomal degradation of DDIT4, and thereby contributes to the inhibition of the mammalian target of rapamycin complex 1 (mTORC1). The polypeptide is Thioredoxin-interacting protein (Txnip) (Mus musculus (Mouse)).